Consider the following 739-residue polypeptide: AN1-type zinc finger protein 4 (739 aa).

In terms of domain architecture, Ubiquitin-like spans 54–129 (MELFIETLTG…LKLVLAMRGG (76 aa)). A compositionally biased stretch (basic residues) spans 246–255 (KPKKVVKVKP). Disordered regions lie at residues 246–270 (KPKK…STAA) and 287–316 (LPSG…RPVS). An AN1-type zinc finger spans residues 673-720 (KKIMKHCFLCGKKTGLATSFECRCGNNFCASHRYAEAHGCTYDYKSAG). Positions 679, 682, 694, 696, 701, 704, 710, and 712 each coordinate Zn(2+).

The sequence is that of AN1-type zinc finger protein 4 (Zfand4) from Mus musculus (Mouse).